The following is a 357-amino-acid chain: 4-hydroxyphenylpyruvate dioxygenase (357 aa).

VOC domains are found at residues 17-137 and 165-316; these read GFEF…LVDR and YIDH…IFTD. Fe cation is bound by residues His-168, His-246, and Glu-325.

Belongs to the 4HPPD family. As to quaternary structure, homotetramer. Requires Fe cation as cofactor.

The catalysed reaction is 3-(4-hydroxyphenyl)pyruvate + O2 = homogentisate + CO2. It functions in the pathway amino-acid degradation; L-phenylalanine degradation; acetoacetate and fumarate from L-phenylalanine: step 3/6. The sequence is that of 4-hydroxyphenylpyruvate dioxygenase (hpd) from Pseudomonas aeruginosa (strain ATCC 15692 / DSM 22644 / CIP 104116 / JCM 14847 / LMG 12228 / 1C / PRS 101 / PAO1).